A 617-amino-acid polypeptide reads, in one-letter code: UvrABC system protein C (617 aa).

The 79-residue stretch at 22–100 (NLPGVYRFFN…IKALSPKYNI (79 aa)) folds into the GIY-YIG domain. Positions 209–244 (DELTRTLQHKMQTAAANLQFEEAARYRDQIQALGIM) constitute a UVR domain.

This sequence belongs to the UvrC family. In terms of assembly, interacts with UvrB in an incision complex.

Its subcellular location is the cytoplasm. Functionally, the UvrABC repair system catalyzes the recognition and processing of DNA lesions. UvrC both incises the 5' and 3' sides of the lesion. The N-terminal half is responsible for the 3' incision and the C-terminal half is responsible for the 5' incision. In Neisseria meningitidis serogroup B (strain ATCC BAA-335 / MC58), this protein is UvrABC system protein C.